We begin with the raw amino-acid sequence, 382 residues long: V-type proton ATPase subunit C 1 (382 aa).

Position 2 is an N-acetylthreonine (Thr-2).

This sequence belongs to the V-ATPase C subunit family. As to quaternary structure, V-ATPase is a heteromultimeric enzyme made up of two complexes: the ATP-hydrolytic V1 complex and the proton translocation V0 complex. The V1 complex consists of three catalytic AB heterodimers that form a heterohexamer, three peripheral stalks each consisting of EG heterodimers, one central rotor including subunits D and F, and the regulatory subunits C and H. The proton translocation complex V0 consists of the proton transport subunit a, a ring of proteolipid subunits c9c'', rotary subunit d, subunits e and f, and the accessory subunits ATP6AP1/Ac45 and ATP6AP2/PRR. As to expression, expressed in brain (at protein level).

The protein resides in the cytoplasmic vesicle. It localises to the secretory vesicle. It is found in the synaptic vesicle membrane. The protein localises to the clathrin-coated vesicle membrane. Subunit of the V1 complex of vacuolar(H+)-ATPase (V-ATPase), a multisubunit enzyme composed of a peripheral complex (V1) that hydrolyzes ATP and a membrane integral complex (V0) that translocates protons. V-ATPase is responsible for acidifying and maintaining the pH of intracellular compartments and in some cell types, is targeted to the plasma membrane, where it is responsible for acidifying the extracellular environment. Subunit C is necessary for the assembly of the catalytic sector of the enzyme and is likely to have a specific function in its catalytic activity. In Rattus norvegicus (Rat), this protein is V-type proton ATPase subunit C 1 (Atp6v1c1).